The following is a 462-amino-acid chain: MSQTLPKIKIPKKPNYNSLALAEGIEFWELFRVIEAKYENCFLLESAGDNQYDSRYSVIGFQPSHLILGEPGILEIDGKKYPVENPYFALRELTDYNSLSISYAGGFVGYLGYQSMQFFEPKLQLKPHPDFPAMIFGLYLDGLIYDKFTGELIYFDNGTNRIHEVNQILEQLKKENSQKPKATVSLVKAGLSKEVHKQMVEEALEEVKAGNTFQCQIGFEEIYQVDGNPLAIYETLREINPSPHMYYVNLELVTILGASPSSLFRLRQGEMESFPLAGTTKRGVDAKEDTLLARKLLTDPKEIAEHNMLIDLHRNDVGRVAKFGTVKVRRRFDVKRFSHVQHISSEVVGILSSKEDMFSGLASSFPRGTLSGAPKIESDSKIIERIEKSPRGPYGGAVGSFGLNGDCTFAIPIRSFFVNGKKGFVRASGGIVFGFIEPEDEYQEIINKMASVRKALDLHKGP.

L-tryptophan contacts are provided by residues S46 and 243 to 245 (PHM). 278-279 (GT) serves as a coordination point for chorismate. Residue E305 participates in Mg(2+) binding. Chorismate contacts are provided by residues Y394, R414, 428 to 430 (SGG), and G430. Residue E444 participates in Mg(2+) binding.

It belongs to the anthranilate synthase component I family. As to quaternary structure, heterotetramer consisting of two non-identical subunits: a beta subunit (TrpG) and a large alpha subunit (TrpE). Requires Mg(2+) as cofactor.

It catalyses the reaction chorismate + L-glutamine = anthranilate + pyruvate + L-glutamate + H(+). It functions in the pathway amino-acid biosynthesis; L-tryptophan biosynthesis; L-tryptophan from chorismate: step 1/5. With respect to regulation, feedback inhibited by tryptophan. Its function is as follows. Part of a heterotetrameric complex that catalyzes the two-step biosynthesis of anthranilate, an intermediate in the biosynthesis of L-tryptophan. In the first step, the glutamine-binding beta subunit (TrpG) of anthranilate synthase (AS) provides the glutamine amidotransferase activity which generates ammonia as a substrate that, along with chorismate, is used in the second step, catalyzed by the large alpha subunit of AS (TrpE) to produce anthranilate. In the absence of TrpG, TrpE can synthesize anthranilate directly from chorismate and high concentrations of ammonia. The chain is Anthranilate synthase component 1 (trpE) from Leptospira biflexa.